Reading from the N-terminus, the 557-residue chain is Formate--tetrahydrofolate ligase (557 aa).

ATP is bound at residue 44-51 (TPLGEGKS).

It belongs to the formate--tetrahydrofolate ligase family.

It catalyses the reaction (6S)-5,6,7,8-tetrahydrofolate + formate + ATP = (6R)-10-formyltetrahydrofolate + ADP + phosphate. Its pathway is one-carbon metabolism; tetrahydrofolate interconversion. This Desulfotalea psychrophila (strain LSv54 / DSM 12343) protein is Formate--tetrahydrofolate ligase.